Consider the following 428-residue polypeptide: Enolase (428 aa).

Glutamine 163 serves as a coordination point for (2R)-2-phosphoglycerate. Catalysis depends on glutamate 205, which acts as the Proton donor. Mg(2+) is bound by residues aspartate 243, glutamate 286, and aspartate 313. (2R)-2-phosphoglycerate-binding residues include lysine 338, arginine 367, serine 368, and lysine 389. The active-site Proton acceptor is lysine 338.

Belongs to the enolase family. The cofactor is Mg(2+).

Its subcellular location is the cytoplasm. It localises to the secreted. It is found in the cell surface. It carries out the reaction (2R)-2-phosphoglycerate = phosphoenolpyruvate + H2O. Its pathway is carbohydrate degradation; glycolysis; pyruvate from D-glyceraldehyde 3-phosphate: step 4/5. Catalyzes the reversible conversion of 2-phosphoglycerate (2-PG) into phosphoenolpyruvate (PEP). It is essential for the degradation of carbohydrates via glycolysis. This is Enolase from Polaromonas naphthalenivorans (strain CJ2).